The sequence spans 110 residues: Putative membrane protein insertion efficiency factor (110 aa).

The protein belongs to the UPF0161 family.

The protein localises to the cell inner membrane. Could be involved in insertion of integral membrane proteins into the membrane. The polypeptide is Putative membrane protein insertion efficiency factor (Campylobacter hominis (strain ATCC BAA-381 / DSM 21671 / CCUG 45161 / LMG 19568 / NCTC 13146 / CH001A)).